The sequence spans 386 residues: Succinate--CoA ligase [ADP-forming] subunit beta (386 aa).

One can recognise an ATP-grasp domain in the interval 9 to 244 (KEILRKYGVP…HDEEDPLETR (236 aa)). ATP contacts are provided by residues K46, 53–55 (GRG), E99, C102, and E107. Residues N199 and D213 each contribute to the Mg(2+) site. Substrate-binding positions include N264 and 321 to 323 (GIM).

The protein belongs to the succinate/malate CoA ligase beta subunit family. In terms of assembly, heterotetramer of two alpha and two beta subunits. It depends on Mg(2+) as a cofactor.

The enzyme catalyses succinate + ATP + CoA = succinyl-CoA + ADP + phosphate. The catalysed reaction is GTP + succinate + CoA = succinyl-CoA + GDP + phosphate. Its pathway is carbohydrate metabolism; tricarboxylic acid cycle; succinate from succinyl-CoA (ligase route): step 1/1. Functionally, succinyl-CoA synthetase functions in the citric acid cycle (TCA), coupling the hydrolysis of succinyl-CoA to the synthesis of either ATP or GTP and thus represents the only step of substrate-level phosphorylation in the TCA. The beta subunit provides nucleotide specificity of the enzyme and binds the substrate succinate, while the binding sites for coenzyme A and phosphate are found in the alpha subunit. The sequence is that of Succinate--CoA ligase [ADP-forming] subunit beta from Rickettsia peacockii (strain Rustic).